The chain runs to 76 residues: Putative cation transport regulator ChaB (76 aa).

It belongs to the ChaB family. Monomer.

Its function is as follows. Might be a regulator of the sodium-potassium/proton antiporter ChaA. This Escherichia coli O157:H7 protein is Putative cation transport regulator ChaB.